Consider the following 1902-residue polypeptide: PII-type proteinase (1902 aa).

The signal sequence occupies residues 1-33 (MQRKKKGLSILLAGTVALGALAVLPVGEIQAKA). Positions 34 to 187 (AISQQTKGSS…VTLAKVYYPT (154 aa)) are excised as a propeptide. The Peptidase S8 domain maps to 191-697 (ANSMANVQAV…AGLVDVKAAI (507 aa)). Catalysis depends on charge relay system residues Asp-217, His-281, and Ser-620. Residues 1796–1874 (GKGDGTTGTS…GALPKTGETT (79 aa)) form a disordered region. A compositionally biased stretch (gly residues) spans 1797–1812 (KGDGTTGTSDKGGGQG). Residues 1830-1843 (SQPSSGGNIPTNPA) show a composition bias toward polar residues. Residues 1867-1871 (LPKTG) carry the LPXTG sorting signal motif. Position 1870 is a pentaglycyl murein peptidoglycan amidated threonine (Thr-1870). The propeptide at 1871-1902 (GETTERPAFGFLGVIVVSLMGVLGLKRKQREE) is removed by sortase.

This sequence belongs to the peptidase S8 family.

It is found in the secreted. The protein localises to the cell wall. It catalyses the reaction Endopeptidase activity with very broad specificity, although some subsite preference have been noted, e.g. large hydrophobic residues in the P1 and P4 positions, and Pro in the P2 position. Best known for its action on caseins, although it has been shown to hydrolyze hemoglobin and oxidized insulin B-chain.. In terms of biological role, protease which breaks down milk proteins during the growth of the bacteria on milk. The sequence is that of PII-type proteinase (prt) from Lactococcus lactis subsp. cremoris (Streptococcus cremoris).